The chain runs to 297 residues: Protein CANDIDATE G-PROTEIN COUPLED RECEPTOR 8 (297 aa).

A glycan (N-linked (GlcNAc...) asparagine) is linked at Asn20. Transmembrane regions (helical) follow at residues 34 to 54 (GFLHNTVLVAASLFFVAYLAY), 70 to 90 (IMIAYYGCLWLVSLLNLAWCC), 107 to 127 (LTLFTTSGMLFLEVSLVAFLF), 142 to 162 (FLISGFIVALDLLLKAIFLFG), 180 to 200 (WGLWIIHKLLLTGVYGMVFLM), 215 to 235 (FYNYIIIMFALYSLYLVASAF), and 242 to 262 (FGFWLYGIMSVCYHALYLPLL).

It belongs to the UPF0359 family.

The protein resides in the membrane. G-protein coupled receptor. Plays a role in plants and microbes interactions. This is Protein CANDIDATE G-PROTEIN COUPLED RECEPTOR 8 from Arabidopsis thaliana (Mouse-ear cress).